Consider the following 579-residue polypeptide: Fatty-acid amide hydrolase 1 (579 aa).

Residues 9–29 (TLSGVSGVCLACSLLSAAVVL) traverse the membrane as a helical segment. At 30-403 (RWTGRQKARG…GDFVDPCLGD (374 aa)) the chain is on the cytoplasmic side. Lysine 142 serves as the catalytic Charge relay system. Substrate is bound by residues methionine 191, serine 217, and 238-241 (IGGS). Catalysis depends on serine 217, which acts as the Charge relay system. The active-site Acyl-ester intermediate is serine 241. A Phosphoserine modification is found at serine 241. The stretch at 404–433 (LILILRLPSWFKRLLSLLLKPLFPRLAAFL) is an intramembrane region. Residues 434–579 (NSMRPRSAEK…QLMTPQKQPS (146 aa)) lie on the Cytoplasmic side of the membrane.

This sequence belongs to the amidase family. In terms of assembly, homodimer. In terms of tissue distribution, found in neuronal cells throughout the CNS. Expressed in liver and brain, and to a lesser extent in spleen, lung, kidney and testes.

It localises to the endoplasmic reticulum membrane. Its subcellular location is the golgi apparatus membrane. It carries out the reaction N-(5Z,8Z,11Z,14Z-eicosatetraenoyl)-ethanolamine + H2O = ethanolamine + (5Z,8Z,11Z,14Z)-eicosatetraenoate. It catalyses the reaction (9Z)-octadecenamide + H2O = (9Z)-octadecenoate + NH4(+). The catalysed reaction is 2-(5Z,8Z,11Z,14Z-eicosatetraenoyl)-glycerol + H2O = glycerol + (5Z,8Z,11Z,14Z)-eicosatetraenoate + H(+). The enzyme catalyses (9Z,12Z,15Z)-octadecatrienamide + H2O = (9Z,12Z,15Z)-octadecatrienoate + NH4(+). It carries out the reaction (5Z,8Z,11Z,14Z)-eicosatetraenamide + H2O = (5Z,8Z,11Z,14Z)-eicosatetraenoate + NH4(+). It catalyses the reaction (6Z)-octadecenamide + H2O = (6Z)-octadecenoate + NH4(+). The catalysed reaction is (15Z)-tetracosenamide + H2O = (15Z)-tetracosenoate + NH4(+). The enzyme catalyses (8Z,11Z,14Z)-eicosatrienamide + H2O = (8Z,11Z,14Z)-eicosatrienoate + NH4(+). It carries out the reaction (11Z,14Z,17Z)-eicosatrienamide + H2O = (11Z,14Z,17Z)-eicosatrienoate + NH4(+). It catalyses the reaction (11Z,14Z)-eicosadienamide + H2O = (11Z,14Z)-eicosadienoate + NH4(+). The catalysed reaction is (9Z,12Z)-octadecadienamide + H2O = (9Z,12Z)-octadecadienoate + NH4(+). The enzyme catalyses tetradecamide + H2O = tetradecanoate + NH4(+). It carries out the reaction N-(9Z-octadecenoyl) ethanolamine + H2O = ethanolamine + (9Z)-octadecenoate. It catalyses the reaction N-(9Z-octadecenoyl)-taurine + H2O = taurine + (9Z)-octadecenoate. The catalysed reaction is 1-O-methyl-(5Z,8Z,11Z,14Z)-eicosatetraenoate + H2O = methanol + (5Z,8Z,11Z,14Z)-eicosatetraenoate + H(+). The enzyme catalyses (11Z)-eicosenamide + H2O = (11Z)-eicosenoate + NH4(+). It carries out the reaction N-(9Z-hexadecenoyl) ethanolamine + H2O = (9Z)-hexadecenoate + ethanolamine. It catalyses the reaction N-octadecanoyl ethanolamine + H2O = octadecanoate + ethanolamine. The catalysed reaction is N-docosanoyl-ethanolamine + H2O = docosanoate + ethanolamine. The enzyme catalyses N-tetracosanoyl-taurine + H2O = tetracosanoate + taurine. It carries out the reaction N-(15Z-tetracosenoyl)-ethanolamine + H2O = (15Z)-tetracosenoate + ethanolamine. It catalyses the reaction N-docosanoyl-taurine + H2O = docosanoate + taurine. The catalysed reaction is N-(15Z-tetracosenoyl)-taurine + H2O = (15Z)-tetracosenoate + taurine. The enzyme catalyses N-tricosanoyl-taurine + H2O = tricosanoate + taurine. It carries out the reaction (9Z)-octadecenoate + glycine = N-(9Z-octadecenoyl)glycine + H2O. It catalyses the reaction N-(5Z,8Z,11Z,14Z)-eicosatetraenoyl-glycine + H2O = (5Z,8Z,11Z,14Z)-eicosatetraenoate + glycine. The catalysed reaction is N-(5Z,8Z,11Z,14Z-eicosatetraenoyl)-L-serine + H2O = (5Z,8Z,11Z,14Z)-eicosatetraenoate + L-serine. With respect to regulation, inhibited by trifluoromethyl ketone. Catalyzes the hydrolysis of endogenous amidated lipids like the sleep-inducing lipid oleamide ((9Z)-octadecenamide), the endocannabinoid anandamide (N-(5Z,8Z,11Z,14Z-eicosatetraenoyl)-ethanolamine), as well as other fatty amides, to their corresponding fatty acids, thereby regulating the signaling functions of these molecules. Hydrolyzes polyunsaturated substrate anandamide preferentially as compared to monounsaturated substrates. It can also catalyze the hydrolysis of the endocannabinoid 2-arachidonoylglycerol (2-(5Z,8Z,11Z,14Z-eicosatetraenoyl)-glycerol). FAAH cooperates with PM20D1 in the hydrolysis of amino acid-conjugated fatty acids such as N-fatty acyl glycine and N-fatty acyl-L-serine, thereby acting as a physiological regulator of specific subsets of intracellular, but not of extracellular, N-fatty acyl amino acids. The protein is Fatty-acid amide hydrolase 1 (Faah) of Rattus norvegicus (Rat).